The sequence spans 436 residues: Trigger factor (436 aa).

Positions 161–246 (DDQLNIDFVG…VNSVSEPKLP (86 aa)) constitute a PPIase FKBP-type domain.

This sequence belongs to the FKBP-type PPIase family. Tig subfamily.

The protein localises to the cytoplasm. It carries out the reaction [protein]-peptidylproline (omega=180) = [protein]-peptidylproline (omega=0). Its function is as follows. Involved in protein export. Acts as a chaperone by maintaining the newly synthesized protein in an open conformation. Functions as a peptidyl-prolyl cis-trans isomerase. The chain is Trigger factor from Pseudomonas fluorescens (strain ATCC BAA-477 / NRRL B-23932 / Pf-5).